The primary structure comprises 77 residues: Vacuolar ATPase assembly integral membrane protein VMA21 (77 aa).

The Cytoplasmic portion of the chain corresponds to 1-8; that stretch reads MAVDVPTS. The chain crosses the membrane as a helical span at residues 9-29; it reads VIVKLMFFTLAMVSFPVLTFF. The Lumenal segment spans residues 30 to 41; it reads VSQQYTSNTLVN. A helical transmembrane segment spans residues 42–62; it reads GGLAALAANVVLFAYVIMAFS. The Cytoplasmic portion of the chain corresponds to 63-77; it reads EDVPQSDGKESKKQQ. Positions 74–77 match the Prevents secretion from ER motif; it reads KKQQ.

The protein belongs to the VMA21 family.

It localises to the endoplasmic reticulum membrane. Its subcellular location is the endoplasmic reticulum-Golgi intermediate compartment membrane. It is found in the cytoplasmic vesicle. The protein resides in the COPII-coated vesicle membrane. Its function is as follows. Required for the assembly of the V0 complex of the vacuolar ATPase (V-ATPase) in the endoplasmic reticulum. This Eremothecium gossypii (strain ATCC 10895 / CBS 109.51 / FGSC 9923 / NRRL Y-1056) (Yeast) protein is Vacuolar ATPase assembly integral membrane protein VMA21.